Consider the following 376-residue polypeptide: PCM7-4 (376 aa).

Functionally, has antibacterial activity against Listeria monocytogenes. The sequence is that of PCM7-4 from Bacillus velezensis.